Reading from the N-terminus, the 561-residue chain is DNA ligase B (561 aa).

The active-site N6-AMP-lysine intermediate is Lys125.

The protein belongs to the NAD-dependent DNA ligase family. LigB subfamily.

It catalyses the reaction NAD(+) + (deoxyribonucleotide)n-3'-hydroxyl + 5'-phospho-(deoxyribonucleotide)m = (deoxyribonucleotide)n+m + AMP + beta-nicotinamide D-nucleotide.. In terms of biological role, catalyzes the formation of phosphodiester linkages between 5'-phosphoryl and 3'-hydroxyl groups in double-stranded DNA using NAD as a coenzyme and as the energy source for the reaction. The protein is DNA ligase B of Salmonella dublin (strain CT_02021853).